The chain runs to 265 residues: RWD domain-containing protein 3 (265 aa).

Positions 7-114 constitute an RWD domain; sequence EEVAALSAIY…WTQQNLNNLI (108 aa).

It is found in the nucleus. The protein resides in the cytoplasm. In terms of biological role, enhancer of SUMO conjugation. Increases SUMO conjugation to proteins by promoting the: binding of E1 and E2 enzymes, thioester linkage between SUMO and ube2i/ubc9 and transfer of SUMO to specific target proteins which include hif1a, pias, nfkbia, nr3c1 and top1. Has no effect on ubiquitination. In Xenopus tropicalis (Western clawed frog), this protein is RWD domain-containing protein 3 (rwdd3).